The chain runs to 374 residues: Aminomethyltransferase (374 aa).

It belongs to the GcvT family. As to quaternary structure, the glycine cleavage system is composed of four proteins: P, T, L and H.

It catalyses the reaction N(6)-[(R)-S(8)-aminomethyldihydrolipoyl]-L-lysyl-[protein] + (6S)-5,6,7,8-tetrahydrofolate = N(6)-[(R)-dihydrolipoyl]-L-lysyl-[protein] + (6R)-5,10-methylene-5,6,7,8-tetrahydrofolate + NH4(+). The glycine cleavage system catalyzes the degradation of glycine. The chain is Aminomethyltransferase from Edwardsiella ictaluri (strain 93-146).